A 469-amino-acid polypeptide reads, in one-letter code: Phosphoenolpyruvate carboxylase (469 aa).

Belongs to the PEPCase type 2 family. As to quaternary structure, homotetramer. The cofactor is Mg(2+).

The catalysed reaction is oxaloacetate + phosphate = phosphoenolpyruvate + hydrogencarbonate. Catalyzes the irreversible beta-carboxylation of phosphoenolpyruvate (PEP) to form oxaloacetate (OAA), a four-carbon dicarboxylic acid source for the tricarboxylic acid cycle. The protein is Phosphoenolpyruvate carboxylase of Pyrococcus abyssi (strain GE5 / Orsay).